Reading from the N-terminus, the 1233-residue chain is Mitogen-activated protein kinase kinase kinase kinase 4 (1233 aa).

Ala2 is modified (N-acetylalanine). Ser5 is modified (phosphoserine). Residues 25-289 (FELVEVVGNG…EQLLKHPFIR (265 aa)) form the Protein kinase domain. Residues 31 to 39 (VGNGTYGQV) and Lys53 contribute to the ATP site. The active-site Proton acceptor is Asp152. 3 disordered regions span residues 305–348 (IDRT…VPGE), 401–463 (QKEQ…VERE), and 489–805 (QAML…ETES). The span at 316-337 (DETEYEYSGSEEEEEEVPEQEG) shows a compositional bias: acidic residues. 2 positions are modified to phosphoserine: Ser323 and Ser325. Over residues 521–537 (PEPKPHYDPADRAREVQ) the composition is skewed to basic and acidic residues. Ser543 is subject to Phosphoserine. Residues 544-559 (LKNNVSPVSRSHSFSD) show a composition bias toward polar residues. A phosphoserine mark is found at Ser619, Ser621, Ser629, and Ser646. A compositionally biased stretch (basic and acidic residues) spans 654–663 (LLWERVEKLV). Residues 666-692 (PGSGSSSGSSNSGSQPGSHPGSQSGSG) show a composition bias toward low complexity. Phosphoserine is present on residues Ser691, Ser703, and Ser706. Basic and acidic residues-rich tracts occupy residues 713–726 (SAAK…EVFR) and 741–756 (KELR…HKVT). Acidic residues predominate over residues 766–781 (GTTDEEEEDVEQEGAD). The span at 783–803 (STSGPEDTRAASSPNLSNGET) shows a compositional bias: polar residues. 5 positions are modified to phosphoserine: Ser785, Ser794, Ser795, Ser799, and Ser817. Thr822 carries the post-translational modification Phosphothreonine. Residues Ser846, Ser849, Ser894, and Ser907 each carry the phosphoserine modification. The mediates interaction with RAP2A stretch occupies residues 852 to 1206 (PFIDPRLLQI…LKFLCGRNDK (355 aa)). The region spanning 920 to 1207 (NSEILCAALW…KFLCGRNDKV (288 aa)) is the CNH domain.

Belongs to the protein kinase superfamily. STE Ser/Thr protein kinase family. STE20 subfamily. As to quaternary structure, interacts with the SH3 domain of the adapter proteins Nck. Interacts (via its CNH regulatory domain) with ATL1 (via the N-terminal region). Interacts with RAP2A (GTP-bound form preferentially). Requires Mg(2+) as cofactor. Appears to be ubiquitous, expressed in all tissue types examined. Highest levels observed in heart and brain.

It is found in the cytoplasm. It catalyses the reaction L-seryl-[protein] + ATP = O-phospho-L-seryl-[protein] + ADP + H(+). The enzyme catalyses L-threonyl-[protein] + ATP = O-phospho-L-threonyl-[protein] + ADP + H(+). Its function is as follows. Serine/threonine kinase that plays a role in the response to environmental stress and cytokines such as TNF-alpha. Appears to act upstream of the JUN N-terminal pathway. Activator of the Hippo signaling pathway which plays a pivotal role in organ size control and tumor suppression by restricting proliferation and promoting apoptosis. MAP4Ks act in parallel to and are partially redundant with STK3/MST2 and STK4/MST2 in the phosphorylation and activation of LATS1/2, and establish MAP4Ks as components of the expanded Hippo pathway. Phosphorylates SMAD1 on Thr-322. This Mus musculus (Mouse) protein is Mitogen-activated protein kinase kinase kinase kinase 4 (Map4k4).